A 553-amino-acid polypeptide reads, in one-letter code: MTKYVFVTGGVVSSLGKGIAAASLAAILESRGLKVTLLKLDPYINVDPGTMSPFQHGEVFVTEDGAETDLDLGHYERFISTKMRKANNFTTGQIYESVIRKERRGDYLGKTVQVIPHITNEIQAFIERGAASATCGEPDVAIVEIGGTVGDIESLPFLEAARQMSLRLGRNSACFVHLTLVPFIATAGELKTKPTQHSVQKLREIGISPHVLLCRADRPIPDDESKKISLFSNVPEDAVISVWDVDSIYKIPQMLHDQGLDRLICEELRLDPQPADLRMWAALVEKLQNPKHEVTIGMVGKYVDLTESYKSLIEALRHASIHTSTKVNIEYINSEELETNGTASLAHLDAVLVPGGFGRRGTEGKIAAVRYAREAKVPYLGICLGMQLAVIEFARDVVGLKQANSTEFDPNTPERVVALITEWYDREGKVEKRTEDSDLGGTMRLGSQRCPIKPGTLAEAIYGKDVNERHRHRYEVNNRFVPQLEAGGLVISARTPSEDLPEMMELPSTMHPWFVGVQFHPEFTSTPRDGHPLFKSFVQAALACQQTRAGAKA.

Residues 1 to 270 (MTKYVFVTGG…DRLICEELRL (270 aa)) are amidoligase domain. Serine 13 contributes to the CTP binding site. Serine 13 contacts UTP. Residues 14 to 19 (SLGKGI) and aspartate 71 contribute to the ATP site. Mg(2+) is bound by residues aspartate 71 and glutamate 144. CTP-binding positions include 151–153 (DIE), 191–196 (KTKPTQ), and lysine 227. UTP contacts are provided by residues 191–196 (KTKPTQ) and lysine 227. A Glutamine amidotransferase type-1 domain is found at 295-547 (TIGMVGKYVD…VQAALACQQT (253 aa)). Glycine 356 lines the L-glutamine pocket. Catalysis depends on cysteine 383, which acts as the Nucleophile; for glutamine hydrolysis. L-glutamine-binding positions include 384–387 (LGMQ), glutamate 407, and arginine 473. Active-site residues include histidine 520 and glutamate 522.

The protein belongs to the CTP synthase family. Homotetramer.

The enzyme catalyses UTP + L-glutamine + ATP + H2O = CTP + L-glutamate + ADP + phosphate + 2 H(+). It catalyses the reaction L-glutamine + H2O = L-glutamate + NH4(+). It carries out the reaction UTP + NH4(+) + ATP = CTP + ADP + phosphate + 2 H(+). It participates in pyrimidine metabolism; CTP biosynthesis via de novo pathway; CTP from UDP: step 2/2. With respect to regulation, allosterically activated by GTP, when glutamine is the substrate; GTP has no effect on the reaction when ammonia is the substrate. The allosteric effector GTP functions by stabilizing the protein conformation that binds the tetrahedral intermediate(s) formed during glutamine hydrolysis. Inhibited by the product CTP, via allosteric rather than competitive inhibition. Catalyzes the ATP-dependent amination of UTP to CTP with either L-glutamine or ammonia as the source of nitrogen. Regulates intracellular CTP levels through interactions with the four ribonucleotide triphosphates. The sequence is that of CTP synthase from Burkholderia mallei (strain NCTC 10229).